We begin with the raw amino-acid sequence, 510 residues long: Leucine-rich repeat-containing protein 53 (510 aa).

LRR repeat units lie at residues 34–55 (TTRV…NLSL), 58–79 (NLAL…ALDG), 82–102 (MLRT…TDHT), 108–129 (SLQV…WFRN), 132–153 (GLTR…SFGG), 158–179 (SLRH…AFRP), and 182–203 (QLQE…FTPL). The LRRCT domain occupies 214-271 (NQWSCTCDLHPLARFLRNYIKSSAHTLRNAKDLNCQPSTAAVAAAQSVLRLSETNCDP). A helical membrane pass occupies residues 294–314 (LLTVLGFAGAVGLTCLGLVVF).

Its subcellular location is the membrane. The sequence is that of Leucine-rich repeat-containing protein 53 (LRRC53) from Macaca fascicularis (Crab-eating macaque).